The primary structure comprises 341 residues: DNA-directed RNA polymerase subunit alpha (341 aa).

The tract at residues 1-233 (MLKDGTSVSN…DLLSPFLHTK (233 aa)) is alpha N-terminal domain (alpha-NTD). Positions 262–341 (SEGDFFKNTF…NEKPRVVGDE (80 aa)) are alpha C-terminal domain (alpha-CTD).

It belongs to the RNA polymerase alpha chain family. In terms of assembly, in plastids the minimal PEP RNA polymerase catalytic core is composed of four subunits: alpha, beta, beta', and beta''. When a (nuclear-encoded) sigma factor is associated with the core the holoenzyme is formed, which can initiate transcription.

It localises to the plastid. Its subcellular location is the chloroplast. It catalyses the reaction RNA(n) + a ribonucleoside 5'-triphosphate = RNA(n+1) + diphosphate. In terms of biological role, DNA-dependent RNA polymerase catalyzes the transcription of DNA into RNA using the four ribonucleoside triphosphates as substrates. The protein is DNA-directed RNA polymerase subunit alpha of Marsilea quadrifolia (European water clover).